We begin with the raw amino-acid sequence, 545 residues long: 1,3-beta-glucanosyltransferase ARB_07487 (545 aa).

A signal peptide spans 1-19; sequence MKFSSLAAATALVAGSVVA. 2 N-linked (GlcNAc...) asparagine glycosylation sites follow: Asn-51 and Asn-69. Cys-88 and Cys-117 form a disulfide bridge. (1,3-beta-D-glucosyl)n contacts are provided by residues Tyr-106, 133–141, Asn-174, and Glu-175; that span reads SEPSTSIIR. The Proton donor role is filled by Glu-175. Asn-179 carries N-linked (GlcNAc...) asparagine glycosylation. (1,3-beta-D-glucosyl)n contacts are provided by Asp-216 and Arg-221. 5 disulfide bridges follow: Cys-230-Cys-363, Cys-248-Cys-279, Cys-384-Cys-437, Cys-393-Cys-464, and Cys-412-Cys-419. Residue Glu-276 is the Nucleophile of the active site. Residue Tyr-308 coordinates (1,3-beta-D-glucosyl)n. The tract at residues 493–513 is disordered; it reads GTGSVTSAPGSGGNKPDQGAA. The GPI-anchor amidated alanine moiety is linked to residue Ala-512. Positions 513–545 are cleaved as a propeptide — removed in mature form; the sequence is ASTISAPSVNLGIVKLGAYIFCAVLAGAGMILI.

Belongs to the glycosyl hydrolase 72 family. The GPI-anchor is attached to the protein in the endoplasmic reticulum and serves to target the protein to the cell surface. There, the glucosamine-inositol phospholipid moiety is cleaved off and the GPI-modified mannoprotein is covalently attached via its lipidless GPI glycan remnant to the 1,6-beta-glucan of the outer cell wall layer.

The protein localises to the secreted. It localises to the cell membrane. It is found in the cell wall. In terms of biological role, splits internally a 1,3-beta-glucan molecule and transfers the newly generated reducing end (the donor) to the non-reducing end of another 1,3-beta-glucan molecule (the acceptor) forming a 1,3-beta linkage, resulting in the elongation of 1,3-beta-glucan chains in the cell wall. Involved in cell wall biosynthesis and morphogenesis. The protein is 1,3-beta-glucanosyltransferase ARB_07487 of Arthroderma benhamiae (strain ATCC MYA-4681 / CBS 112371) (Trichophyton mentagrophytes).